Here is a 432-residue protein sequence, read N- to C-terminus: Trigger factor (432 aa).

A PPIase FKBP-type domain is found at 161–246 (EDRVTIDFTG…LKKVEERELP (86 aa)).

Belongs to the FKBP-type PPIase family. Tig subfamily. Homodimer and monomer. In vivo most of the ribosomes are in complex with monomeric TF. Uncomplexed TF, however, is in a monomer-dimer equilibrium with approximately two thirds of TF existing in a dimeric state.

It localises to the cytoplasm. It carries out the reaction [protein]-peptidylproline (omega=180) = [protein]-peptidylproline (omega=0). Functionally, involved in protein export. Acts as a chaperone by maintaining the newly synthesized protein in an open conformation. Functions as a peptidyl-prolyl cis-trans isomerase. The polypeptide is Trigger factor (Shigella boydii serotype 4 (strain Sb227)).